The primary structure comprises 650 residues: Secretin OutD (650 aa).

Residues 1–18 form the signal peptide; that stretch reads MLLLSGSVLLMASSLAWS. The interval 20 to 115 is N0; that stretch reads EFSASFKGTD…LATDRQPGIG (96 aa). The interval 117-181 is N1; it reads EVVTRVVPVN…TIVERVDQTG (65 aa). The interval 182-255 is N2; sequence DRNVTTIPLS…MVKQLDRQQA (74 aa). Residues 258–330 form an N3 region; that stretch reads GNTKVIYLKY…DLEQVIAQLD (73 aa). The interval 335 to 585 is secretin; that stretch reads QVLVEAIIAE…LFIRPSIIRD (251 aa). The s domain stretch occupies residues 587–650; the sequence is SQFQSASASK…IVAFYPAGGK (64 aa).

The protein belongs to the bacterial secretin family. GSP D subfamily. As to quaternary structure, forms a cylindrical channel with 15 subunits.

It is found in the cell outer membrane. Its function is as follows. Involved in a type II secretion system (T2SS, formerly general secretion pathway, GSP) for the export of proteins. Required for the translocation of the multiple pectic enzymes. This subunit forms the outer membrane channel. The chain is Secretin OutD (outD) from Pectobacterium carotovorum subsp. carotovorum (Erwinia carotovora subsp. carotovora).